A 349-amino-acid polypeptide reads, in one-letter code: 26S proteasome non-ATPase regulatory subunit 4 (349 aa).

The 184-residue stretch at 5–188 (ATIVCLDNSE…LSDIILQSPI (184 aa)) folds into the VWFA domain. Residues 204–223 (DTDPDLAMALKLSLEEEKQR) form the UIM 1 domain. The span at 219 to 234 (EEKQRQERERKAREEA) shows a compositional bias: basic and acidic residues. 2 disordered regions span residues 219-257 (EEKQRQERERKAREEANGGSTNSGTTTTTAPTESNMDVN) and 274-349 (TDKM…NEKK). A compositionally biased stretch (low complexity) spans 235 to 253 (NGGSTNSGTTTTTAPTESN). The 20-residue stretch at 259 to 278 (EDDPELAEALALSMATDKME) folds into the UIM 2 domain. Positions 280–301 (QSSTTNTDSQPPQQQQQPPTDD) are enriched in low complexity. Residues 335–349 (LSKKDEDKDKDNEKK) show a composition bias toward basic and acidic residues.

This sequence belongs to the proteasome subunit S5A family. In terms of assembly, the 26S proteasome is composed of a core protease, known as the 20S proteasome, capped at one or both ends by the 19S regulatory complex (RC). The RC is composed of at least 18 different subunits in two subcomplexes, the base and the lid, which form the portions proximal and distal to the 20S proteolytic core, respectively.

Binds and presumably selects ubiquitin-conjugates for destruction. The sequence is that of 26S proteasome non-ATPase regulatory subunit 4 (psmD4) from Dictyostelium discoideum (Social amoeba).